The chain runs to 142 residues: Small ribosomal subunit protein bS6 (142 aa).

Over residues 110-133 (NKKPSHAKEKHEKTEHTHSHHTEE) the composition is skewed to basic and acidic residues. The interval 110-142 (NKKPSHAKEKHEKTEHTHSHHTEETESVGSHSK) is disordered.

This sequence belongs to the bacterial ribosomal protein bS6 family.

Functionally, binds together with bS18 to 16S ribosomal RNA. In Helicobacter pylori (strain Shi470), this protein is Small ribosomal subunit protein bS6.